We begin with the raw amino-acid sequence, 142 residues long: Transcriptional regulator MraZ (142 aa).

2 consecutive SpoVT-AbrB domains span residues 5–51 (ASAL…PRPE) and 77–120 (AADV…DAAT).

This sequence belongs to the MraZ family. Forms oligomers.

It localises to the cytoplasm. It is found in the nucleoid. This Ralstonia pickettii (strain 12J) protein is Transcriptional regulator MraZ.